A 489-amino-acid chain; its full sequence is UDP-N-acetylmuramoyl-L-alanyl-D-glutamate--2,6-diaminopimelate ligase (489 aa).

Ser32 is a binding site for UDP-N-acetyl-alpha-D-muramoyl-L-alanyl-D-glutamate. Residue 113–119 participates in ATP binding; that stretch reads GTNGKTT. Residues 154–155, Ser181, Gln187, and Arg189 contribute to the UDP-N-acetyl-alpha-D-muramoyl-L-alanyl-D-glutamate site; that span reads TT. N6-carboxylysine is present on Lys221. Meso-2,6-diaminopimelate is bound by residues Arg381, 405 to 408, Gly456, and Glu460; that span reads DNPR. A Meso-diaminopimelate recognition motif motif is present at residues 405–408; it reads DNPR.

It belongs to the MurCDEF family. MurE subfamily. It depends on Mg(2+) as a cofactor. Post-translationally, carboxylation is probably crucial for Mg(2+) binding and, consequently, for the gamma-phosphate positioning of ATP.

It is found in the cytoplasm. It carries out the reaction UDP-N-acetyl-alpha-D-muramoyl-L-alanyl-D-glutamate + meso-2,6-diaminopimelate + ATP = UDP-N-acetyl-alpha-D-muramoyl-L-alanyl-gamma-D-glutamyl-meso-2,6-diaminopimelate + ADP + phosphate + H(+). Its pathway is cell wall biogenesis; peptidoglycan biosynthesis. In terms of biological role, catalyzes the addition of meso-diaminopimelic acid to the nucleotide precursor UDP-N-acetylmuramoyl-L-alanyl-D-glutamate (UMAG) in the biosynthesis of bacterial cell-wall peptidoglycan. The protein is UDP-N-acetylmuramoyl-L-alanyl-D-glutamate--2,6-diaminopimelate ligase of Gloeobacter violaceus (strain ATCC 29082 / PCC 7421).